The following is a 70-amino-acid chain: DNA-directed RNA polymerase subunit omega (70 aa).

This sequence belongs to the RNA polymerase subunit omega family. In terms of assembly, in cyanobacteria the RNAP catalytic core is composed of 2 alpha, 1 beta, 1 beta', 1 gamma and 1 omega subunit. When a sigma factor is associated with the core the holoenzyme is formed, which can initiate transcription.

It carries out the reaction RNA(n) + a ribonucleoside 5'-triphosphate = RNA(n+1) + diphosphate. In terms of biological role, promotes RNA polymerase assembly. Latches the N- and C-terminal regions of the beta' subunit thereby facilitating its interaction with the beta and alpha subunits. In Prochlorococcus marinus (strain NATL1A), this protein is DNA-directed RNA polymerase subunit omega.